The sequence spans 364 residues: tRNA 2-selenouridine synthase (364 aa).

The Rhodanese domain occupies 14–137 (LIADTPIIDV…LRQTAIQATI (124 aa)). The S-selanylcysteine intermediate role is filled by Cys97.

The protein belongs to the SelU family. Monomer.

It carries out the reaction 5-methylaminomethyl-2-thiouridine(34) in tRNA + selenophosphate + (2E)-geranyl diphosphate + H2O + H(+) = 5-methylaminomethyl-2-selenouridine(34) in tRNA + (2E)-thiogeraniol + phosphate + diphosphate. The enzyme catalyses 5-methylaminomethyl-2-thiouridine(34) in tRNA + (2E)-geranyl diphosphate = 5-methylaminomethyl-S-(2E)-geranyl-thiouridine(34) in tRNA + diphosphate. It catalyses the reaction 5-methylaminomethyl-S-(2E)-geranyl-thiouridine(34) in tRNA + selenophosphate + H(+) = 5-methylaminomethyl-2-(Se-phospho)selenouridine(34) in tRNA + (2E)-thiogeraniol. The catalysed reaction is 5-methylaminomethyl-2-(Se-phospho)selenouridine(34) in tRNA + H2O = 5-methylaminomethyl-2-selenouridine(34) in tRNA + phosphate. Functionally, involved in the post-transcriptional modification of the uridine at the wobble position (U34) of tRNA(Lys), tRNA(Glu) and tRNA(Gln). Catalyzes the conversion of 2-thiouridine (S2U-RNA) to 2-selenouridine (Se2U-RNA). Acts in a two-step process involving geranylation of 2-thiouridine (S2U) to S-geranyl-2-thiouridine (geS2U) and subsequent selenation of the latter derivative to 2-selenouridine (Se2U) in the tRNA chain. This chain is tRNA 2-selenouridine synthase, found in Escherichia coli (strain ATCC 8739 / DSM 1576 / NBRC 3972 / NCIMB 8545 / WDCM 00012 / Crooks).